We begin with the raw amino-acid sequence, 275 residues long: Glutamate racemase (275 aa).

Substrate contacts are provided by residues 12–13 (DS) and 44–45 (YG). The Proton donor/acceptor role is filled by C75. Residue 76–77 (NT) participates in substrate binding. C185 functions as the Proton donor/acceptor in the catalytic mechanism. Residue 186–187 (TH) participates in substrate binding.

The protein belongs to the aspartate/glutamate racemases family.

The enzyme catalyses L-glutamate = D-glutamate. The protein operates within cell wall biogenesis; peptidoglycan biosynthesis. Its function is as follows. Provides the (R)-glutamate required for cell wall biosynthesis. The sequence is that of Glutamate racemase from Mycobacterium avium (strain 104).